Reading from the N-terminus, the 238-residue chain is Probable transcriptional regulatory protein Mmwyl1_2868 (238 aa).

The protein belongs to the TACO1 family.

The protein resides in the cytoplasm. The polypeptide is Probable transcriptional regulatory protein Mmwyl1_2868 (Marinomonas sp. (strain MWYL1)).